The chain runs to 118 residues: Putative pterin-4-alpha-carbinolamine dehydratase (118 aa).

This sequence belongs to the pterin-4-alpha-carbinolamine dehydratase family.

The catalysed reaction is (4aS,6R)-4a-hydroxy-L-erythro-5,6,7,8-tetrahydrobiopterin = (6R)-L-erythro-6,7-dihydrobiopterin + H2O. The sequence is that of Putative pterin-4-alpha-carbinolamine dehydratase from Stutzerimonas stutzeri (strain A1501) (Pseudomonas stutzeri).